Consider the following 274-residue polypeptide: Rhamnulose-1-phosphate aldolase (274 aa).

Glu117 is a catalytic residue. Zn(2+)-binding residues include His141, His143, and His212.

The protein belongs to the aldolase class II family. RhaD subfamily. As to quaternary structure, homotetramer. Requires Zn(2+) as cofactor.

The protein localises to the cytoplasm. It carries out the reaction L-rhamnulose 1-phosphate = (S)-lactaldehyde + dihydroxyacetone phosphate. It participates in carbohydrate degradation; L-rhamnose degradation; glycerone phosphate from L-rhamnose: step 3/3. Functionally, catalyzes the reversible cleavage of L-rhamnulose-1-phosphate to dihydroxyacetone phosphate (DHAP) and L-lactaldehyde. This Escherichia coli O157:H7 protein is Rhamnulose-1-phosphate aldolase.